The following is a 478-amino-acid chain: Transcript termination protein A18 (478 aa).

In terms of domain architecture, Helicase ATP-binding spans 98–254 (KLSTHRPMYM…NDVVNVLKVS (157 aa)). ATP is bound at residue 111–118 (LSCGFGKT). Residues 204 to 207 (DESH) carry the DESH box motif. Residues 302–454 (PRNNLIVDTV…IVSVSTDKLG (153 aa)) form the Helicase C-terminal domain. The interval 456-478 (QQEGKEGTKEEPALTKAFSSQIR) is disordered. Residues 458 to 468 (EGKEGTKEEPA) are compositionally biased toward basic and acidic residues.

This sequence belongs to the helicase family. Poxviruses subfamily. In terms of assembly, interacts with G2. Might be part of a transcription complex composed at least of G2, A18, and H5.

It localises to the virion. In terms of biological role, DNA helicase which seems to act as a postreplicative transcription termination factor. Involved in ATP-dependent release of nascent RNA. Forms a stable complex with single-stranded DNA, and to a lesser extent RNA. This is Transcript termination protein A18 from Oryctolagus cuniculus (Rabbit).